Here is a 647-residue protein sequence, read N- to C-terminus: Threonine--tRNA ligase (647 aa).

In terms of domain architecture, TGS spans 1–61; it reads MIKITFPDGA…EEDGSIEIVT (61 aa). Positions 240–538 are catalytic; it reads DHRKLGKELD…LIETYKGAFP (299 aa). Positions 334, 385, and 515 each coordinate Zn(2+).

Belongs to the class-II aminoacyl-tRNA synthetase family. Homodimer. Zn(2+) is required as a cofactor.

It is found in the cytoplasm. It carries out the reaction tRNA(Thr) + L-threonine + ATP = L-threonyl-tRNA(Thr) + AMP + diphosphate + H(+). Functionally, catalyzes the attachment of threonine to tRNA(Thr) in a two-step reaction: L-threonine is first activated by ATP to form Thr-AMP and then transferred to the acceptor end of tRNA(Thr). Also edits incorrectly charged L-seryl-tRNA(Thr). The sequence is that of Threonine--tRNA ligase from Streptococcus pyogenes serotype M18 (strain MGAS8232).